Consider the following 1839-residue polypeptide: Nuclear pore complex protein DDB_G0274915 (1839 aa).

Composition is skewed to polar residues over residues 1-27 (MNGR…NTIN) and 35-54 (NGSL…QTNK). 10 disordered regions span residues 1 to 54 (MNGR…QTNK), 78 to 150 (DESS…ISDD), 325 to 367 (KQFD…PNAD), 480 to 568 (PLNK…FSTT), 589 to 636 (TTIA…GGGV), 657 to 705 (VSTS…DVPG), 739 to 810 (TTTT…DSKT), 818 to 837 (PTTE…SSLF), 846 to 1106 (TTPS…FSSN), and 1129 to 1839 (TTAT…AKKK). Over residues 80-90 (SSSSSSSSSSS) the composition is skewed to low complexity. Positions 91–101 (YDDGNNIPQKG) are enriched in polar residues. Composition is skewed to low complexity over residues 102 to 148 (SSTT…INIS) and 329 to 343 (DNNN…SIYN). Residues 344–354 (RQSIYSPNSKI) are compositionally biased toward polar residues. Low complexity-rich tracts occupy residues 495-568 (TYAT…FSTT) and 589-607 (TTIA…SSSS). Residues 616-628 (MFTSDSNKSNLFS) are compositionally biased toward polar residues. Composition is skewed to low complexity over residues 658–671 (STST…SKSS) and 739–760 (TTTT…TTDK). The segment covering 761–773 (SSADKSSADKSST) has biased composition (basic and acidic residues). 3 stretches are compositionally biased toward low complexity: residues 774-803 (DKST…TTTT), 827-837 (PTTSLTSSSLF), and 846-871 (TTPS…NTTT). 2 stretches are compositionally biased toward acidic residues: residues 896 to 923 (ESDE…EAEE) and 944 to 958 (LEAE…DSDE). 2 stretches are compositionally biased toward low complexity: residues 1005-1021 (GSSL…SFLT) and 1046-1060 (SSSS…IPTT). Basic and acidic residues predominate over residues 1061 to 1070 (SKKEKIDDKP). Residues 1071-1092 (STTTTTTTTSLFGSTTTSGLFS) show a composition bias toward low complexity. Residues 1093-1106 (NPSTTSTGSLFSSN) are compositionally biased toward polar residues. Composition is skewed to low complexity over residues 1129 to 1242 (TTAT…FGST) and 1250 to 1292 (ATTT…GLFG). Over residues 1293–1310 (ASSSTTPSTGLFGSATTP) the composition is skewed to polar residues. 2 stretches are compositionally biased toward low complexity: residues 1311-1384 (STGL…TTPP) and 1397-1498 (LFGT…TTAT). A compositionally biased stretch (polar residues) spans 1507 to 1521 (TAPSTGLFGSTTATN). Over residues 1522–1673 (PSTGLFGSTT…SSTPFGASPF (152 aa)) the composition is skewed to low complexity. Polar residues predominate over residues 1676–1708 (PTSTSSPPFGAPTSASSTPFGAPQISTSSSTNL). Residues 1712–1810 (ASSSTAAPSF…PFGSTPSTAP (99 aa)) are compositionally biased toward low complexity.

This is Nuclear pore complex protein DDB_G0274915 from Dictyostelium discoideum (Social amoeba).